Here is a 311-residue protein sequence, read N- to C-terminus: Methionyl-tRNA formyltransferase (311 aa).

110-113 is a (6S)-5,6,7,8-tetrahydrofolate binding site; the sequence is SLLP.

Belongs to the Fmt family.

The enzyme catalyses L-methionyl-tRNA(fMet) + (6R)-10-formyltetrahydrofolate = N-formyl-L-methionyl-tRNA(fMet) + (6S)-5,6,7,8-tetrahydrofolate + H(+). Attaches a formyl group to the free amino group of methionyl-tRNA(fMet). The formyl group appears to play a dual role in the initiator identity of N-formylmethionyl-tRNA by promoting its recognition by IF2 and preventing the misappropriation of this tRNA by the elongation apparatus. This chain is Methionyl-tRNA formyltransferase, found in Streptococcus agalactiae serotype Ia (strain ATCC 27591 / A909 / CDC SS700).